Consider the following 313-residue polypeptide: Glutathione S-transferase omega-like 2 (313 aa).

Cys49 (nucleophile) is an active-site residue. The GST C-terminal domain occupies Pro161–Tyr289.

The protein belongs to the GST superfamily. Omega family.

It is found in the cytoplasm. It localises to the nucleus. The protein localises to the golgi apparatus. It catalyses the reaction RX + glutathione = an S-substituted glutathione + a halide anion + H(+). The catalysed reaction is L-dehydroascorbate + 2 glutathione = glutathione disulfide + L-ascorbate. Its function is as follows. Active as '1-Cys' thiol transferase against beta-hydroxyethyl disulfide (HED), as dehydroascorbate reductase and as dimethylarsinic acid reductase, while not active against the standard GST substrate 1-chloro-2,4-dinitrobenzene (CDNB). May be involved in cell wall organization and biogenesis. This chain is Glutathione S-transferase omega-like 2 (gto2), found in Schizosaccharomyces pombe (strain 972 / ATCC 24843) (Fission yeast).